The sequence spans 151 residues: Small ribosomal subunit protein uS11 (151 aa).

The tract at residues 131–151 (DVTPVPSDSTRRKGGRRGRRL) is disordered. Residues 142-151 (RKGGRRGRRL) are compositionally biased toward basic residues.

Belongs to the universal ribosomal protein uS11 family.

The polypeptide is Small ribosomal subunit protein uS11 (Bombyx mori (Silk moth)).